A 585-amino-acid chain; its full sequence is A-type ATP synthase subunit A (585 aa).

Residues 192 to 211 (MRQEWPVREPRPTVEKKTPR) are disordered. Residues 196–211 (WPVREPRPTVEKKTPR) are compositionally biased toward basic and acidic residues. 237-244 (GPFGSGKT) provides a ligand contact to ATP.

Belongs to the ATPase alpha/beta chains family. In terms of assembly, has multiple subunits with at least A(3), B(3), C, D, E, F, H, I and proteolipid K(x).

It localises to the cell membrane. It catalyses the reaction ATP + H2O + 4 H(+)(in) = ADP + phosphate + 5 H(+)(out). In terms of biological role, component of the A-type ATP synthase that produces ATP from ADP in the presence of a proton gradient across the membrane. The A chain is the catalytic subunit. This chain is A-type ATP synthase subunit A, found in Haloquadratum walsbyi (strain DSM 16790 / HBSQ001).